We begin with the raw amino-acid sequence, 504 residues long: Maturase K (504 aa).

The protein belongs to the intron maturase 2 family. MatK subfamily.

The protein resides in the plastid. The protein localises to the chloroplast. Functionally, usually encoded in the trnK tRNA gene intron. Probably assists in splicing its own and other chloroplast group II introns. This Cucumis sativus (Cucumber) protein is Maturase K.